A 54-amino-acid chain; its full sequence is VTSYTLNEIVPLKDVVPEWVRIGFSATTGAEFAAHEVLSWSFHSELEETSASKQ.

It belongs to the leguminous lectin family. As to quaternary structure, tetramer of two alpha and two beta chains.

The protein is Lectin alpha chain of Lathyrus tingitanus (Tangier pea).